The sequence spans 271 residues: Aminoglycoside 3'-phosphotransferase (271 aa).

Aspartate 198 functions as the Proton acceptor in the catalytic mechanism.

This sequence belongs to the aminoglycoside phosphotransferase family.

It catalyses the reaction kanamycin A + ATP = kanamycin 3'-phosphate + ADP + H(+). Its function is as follows. Resistance to kanamycin and structurally-related aminoglycosides, including amikacin. The protein is Aminoglycoside 3'-phosphotransferase of Salmonella typhimurium.